A 530-amino-acid chain; its full sequence is Alpha-(1,3)-fucosyltransferase 4 (530 aa).

Disordered regions lie at residues 1-48 (MRRL…RAVP) and 66-113 (HLGG…TPAD). At 1–147 (MRRLWGAARK…GGRRRWRRGR (147 aa)) the chain is on the cytoplasmic side. Residues 88–106 (ASGERQRRLEPQLQHESRC) show a composition bias toward basic and acidic residues. The chain crosses the membrane as a helical; Signal-anchor for type II membrane protein span at residues 148–172 (GLPWTVCVLAAAGLTCTALITYACW). Over 173 to 530 (GQLPPLPWAS…IRNLASWFER (358 aa)) the chain is Lumenal. 2 N-linked (GlcNAc...) asparagine glycosylation sites follow: Asn216 and Asn315.

The protein belongs to the glycosyltransferase 10 family.

The protein localises to the golgi apparatus. It localises to the golgi stack membrane. It carries out the reaction a beta-D-galactosyl-(1-&gt;4)-N-acetyl-beta-D-glucosaminyl derivative + GDP-beta-L-fucose = a beta-D-galactosyl-(1-&gt;4)-[alpha-L-fucosyl-(1-&gt;3)]-N-acetyl-beta-D-glucosaminyl derivative + GDP + H(+). It catalyses the reaction an N-acetyl-alpha-neuraminyl-(2-&gt;3)-beta-D-galactosyl-(1-&gt;4)-N-acetyl-beta-D-glucosaminyl derivative + GDP-beta-L-fucose = an alpha-Neu5Ac-(2-&gt;3)-beta-D-Gal-(1-&gt;4)-[alpha-L-Fuc-(1-&gt;3)]-beta-D-GlcNAc derivative + GDP + H(+). The enzyme catalyses an alpha-Neu5Ac-(2-&gt;3)-beta-D-Gal-(1-&gt;4)-beta-D-GlcNAc-(1-&gt;3)-beta-D-Gal-(1-&gt;4)-beta-D-GlcNAc derivative + GDP-beta-L-fucose = an alpha-Neu5Ac-(2-&gt;3)-beta-D-Gal-(1-&gt;4)-beta-D-GlcNAc-(1-&gt;3)-beta-D-Gal-(1-&gt;4)-[alpha-L-Fuc-(1-&gt;3)]-beta-D-GlcNAc derivative + GDP + H(+). The catalysed reaction is an alpha-Neu5Ac-(2-&gt;3)-beta-D-Gal-(1-&gt;4)-beta-D-GlcNAc6S derivative + GDP-beta-L-fucose = an alpha-Neu5Ac-(2-&gt;3)-beta-D-Gal-(1-&gt;4)-[alpha-L-Fuc-(1-&gt;3)]-beta-D-GlcNAc6S derivative + GDP + H(+). It participates in protein modification; protein glycosylation. Its function is as follows. Catalyzes alpha(1-&gt;3) linkage of fucosyl moiety transferred from GDP-beta-L-fucose to N-acetyl glucosamine (GlcNAc) within type 2 lactosamine (LacNAc, Gal-beta(1-&gt;4)GlcNAc) glycan attached to N- or O-linked glycoproteins. Robustly fucosylates nonsialylated distal LacNAc unit of the polylactosamine chain to form Lewis X antigen (CD15), a glycan determinant known to mediate important cellular functions in development and immunity. Fucosylates with lower efficiency sialylated LacNAc acceptors to form sialyl Lewis X and 6-sulfo sialyl Lewis X determinants that serve as recognition epitopes for C-type lectins. Together with FUT7 contributes to SELE, SELL and SELP selectin ligand biosynthesis and selectin-dependent lymphocyte homing, leukocyte migration and blood leukocyte homeostasis. In a cell type specific manner, may also fucosylate the internal LacNAc unit of the polylactosamine chain to form VIM-2 antigen that serves as recognition epitope for SELE. This is Alpha-(1,3)-fucosyltransferase 4 (FUT4) from Pan troglodytes (Chimpanzee).